The chain runs to 298 residues: ATP synthase F(1) complex subunit gamma, mitochondrial (298 aa).

The N-terminal 25 residues, 1–25 (MFSRASVVGLSACAVQPQWIQVRNM), are a transit peptide targeting the mitochondrion. N6-acetyllysine is present on lysine 39. The residue at position 49 (lysine 49) is an N6-succinyllysine. Lysine 55 carries the N6-acetyllysine modification. Residue lysine 115 is modified to N6-acetyllysine; alternate. The residue at position 115 (lysine 115) is an N6-succinyllysine; alternate. An N6-acetyllysine modification is found at lysine 138. Residue serine 146 is modified to Phosphoserine. Lysine 154 carries the N6-acetyllysine; alternate modification. Lysine 154 carries the post-translational modification N6-succinyllysine; alternate. At lysine 197 the chain carries N6-acetyllysine. Position 270 is an N6-succinyllysine (lysine 270).

This sequence belongs to the ATPase gamma chain family. In terms of assembly, component of the ATP synthase complex composed at least of ATP5F1A/subunit alpha, ATP5F1B/subunit beta, ATP5MC1/subunit c (homooctomer), MT-ATP6/subunit a, MT-ATP8/subunit 8, ATP5ME/subunit e, ATP5MF/subunit f, ATP5MG/subunit g, ATP5MK/subunit k, ATP5MJ/subunit j, ATP5F1C/subunit gamma, ATP5F1D/subunit delta, ATP5F1E/subunit epsilon, ATP5PF/subunit F6, ATP5PB/subunit b, ATP5PD/subunit d, ATP5PO/subunit OSCP. ATP synthase complex consists of a soluble F(1) head domain (subunits alpha(3) and beta(3)) - the catalytic core - and a membrane F(0) domain - the membrane proton channel (subunits c, a, 8, e, f, g, k and j). These two domains are linked by a central stalk (subunits gamma, delta, and epsilon) rotating inside the F1 region and a stationary peripheral stalk (subunits F6, b, d, and OSCP). Interacts with FLVCR2; this interaction occurs in the absence of heme and is disrupted upon heme binding.

Its subcellular location is the mitochondrion inner membrane. In terms of biological role, subunit gamma, of the mitochondrial membrane ATP synthase complex (F(1)F(0) ATP synthase or Complex V) that produces ATP from ADP in the presence of a proton gradient across the membrane which is generated by electron transport complexes of the respiratory chain. ATP synthase complex consist of a soluble F(1) head domain - the catalytic core - and a membrane F(1) domain - the membrane proton channel. These two domains are linked by a central stalk rotating inside the F(1) region and a stationary peripheral stalk. During catalysis, ATP synthesis in the catalytic domain of F(1) is coupled via a rotary mechanism of the central stalk subunits to proton translocation. In vivo, can only synthesize ATP although its ATP hydrolase activity can be activated artificially in vitro. With the central stalk subunit delta, is essential for the biogenesis of F(1) catalytic part of the ATP synthase complex namely in the formation of F1 assembly intermediate. The polypeptide is ATP synthase F(1) complex subunit gamma, mitochondrial (Mus musculus (Mouse)).